We begin with the raw amino-acid sequence, 819 residues long: Aminopeptidase O (819 aa).

Residue His-479 coordinates Zn(2+). Catalysis depends on Glu-480, which acts as the Proton acceptor. Residues His-483 and Glu-502 each contribute to the Zn(2+) site. Residues 689–699 (RRPRKRKRREK) carry the Nucleolar localization signal motif.

This sequence belongs to the peptidase M1 family. Zn(2+) serves as cofactor.

The protein localises to the nucleus. It is found in the nucleolus. The protein resides in the cytoplasm. Functionally, aminopeptidase which catalyzes the hydrolysis of amino acid residues from the N-terminus of peptide or protein substrates. This Homo sapiens (Human) protein is Aminopeptidase O.